The primary structure comprises 138 residues: MATRTQARGAVVELLYAFESGNEEIKKIASSMLEEKKIKNNQLAFALSLFNGVLERINEIDALIEPHLKDWDFKRLGSMEKAILRLGAYEIGFTPTQNPIIINECIELGKLYAEPNTPKFLNAILDSLSKKLAQKPLN.

The protein belongs to the NusB family.

Involved in transcription antitermination. Required for transcription of ribosomal RNA (rRNA) genes. Binds specifically to the boxA antiterminator sequence of the ribosomal RNA (rrn) operons. This Helicobacter pylori (strain G27) protein is Transcription antitermination protein NusB.